A 393-amino-acid chain; its full sequence is Chorismate synthase (393 aa).

Positions 40 and 46 each coordinate NADP(+). Residues 135–137 (RAS), 257–258 (QA), Gly-301, 316–320 (KPIAT), and Arg-342 each bind FMN. Residues 280-306 (DEIDVGPDGIRRRSNRAGGVEGGMSTG) form a disordered region.

This sequence belongs to the chorismate synthase family. In terms of assembly, homotetramer. The cofactor is FMNH2.

It carries out the reaction 5-O-(1-carboxyvinyl)-3-phosphoshikimate = chorismate + phosphate. It functions in the pathway metabolic intermediate biosynthesis; chorismate biosynthesis; chorismate from D-erythrose 4-phosphate and phosphoenolpyruvate: step 7/7. Its function is as follows. Catalyzes the anti-1,4-elimination of the C-3 phosphate and the C-6 proR hydrogen from 5-enolpyruvylshikimate-3-phosphate (EPSP) to yield chorismate, which is the branch point compound that serves as the starting substrate for the three terminal pathways of aromatic amino acid biosynthesis. This reaction introduces a second double bond into the aromatic ring system. This chain is Chorismate synthase, found in Thermobifida fusca (strain YX).